Here is a 463-residue protein sequence, read N- to C-terminus: Probable Xaa-Pro aminopeptidase pepP (463 aa).

Residues aspartate 259, aspartate 270, glutamate 393, and glutamate 433 each coordinate Mn(2+).

Belongs to the peptidase M24B family. Requires Mn(2+) as cofactor.

The enzyme catalyses Release of any N-terminal amino acid, including proline, that is linked to proline, even from a dipeptide or tripeptide.. Functionally, catalyzes the removal of a penultimate prolyl residue from the N-termini of peptides. This chain is Probable Xaa-Pro aminopeptidase pepP (pepP), found in Pyrenophora tritici-repentis (strain Pt-1C-BFP) (Wheat tan spot fungus).